Consider the following 585-residue polypeptide: Arginine--tRNA ligase (585 aa).

The 'HIGH' region motif lies at 130–140; sequence ANPTGPMHVGH.

It belongs to the class-I aminoacyl-tRNA synthetase family. As to quaternary structure, monomer.

It localises to the cytoplasm. It carries out the reaction tRNA(Arg) + L-arginine + ATP = L-arginyl-tRNA(Arg) + AMP + diphosphate. The protein is Arginine--tRNA ligase of Methylorubrum extorquens (strain PA1) (Methylobacterium extorquens).